A 156-amino-acid polypeptide reads, in one-letter code: Phosphopantetheine adenylyltransferase (156 aa).

Thr-9 contributes to the substrate binding site. ATP contacts are provided by residues 9–10 (TF) and His-17. 3 residues coordinate substrate: Lys-41, Leu-73, and Arg-87. ATP is bound by residues 88-90 (GVR), Glu-98, and 123-129 (WAFVSST).

Belongs to the bacterial CoaD family. Homohexamer. Mg(2+) serves as cofactor.

The protein localises to the cytoplasm. It carries out the reaction (R)-4'-phosphopantetheine + ATP + H(+) = 3'-dephospho-CoA + diphosphate. It participates in cofactor biosynthesis; coenzyme A biosynthesis; CoA from (R)-pantothenate: step 4/5. In terms of biological role, reversibly transfers an adenylyl group from ATP to 4'-phosphopantetheine, yielding dephospho-CoA (dPCoA) and pyrophosphate. This is Phosphopantetheine adenylyltransferase from Haemophilus influenzae (strain 86-028NP).